We begin with the raw amino-acid sequence, 305 residues long: Dihydroorotate dehydrogenase B (NAD(+)), catalytic subunit (305 aa).

FMN contacts are provided by residues serine 21 and 45-46 (KG). Substrate is bound by residues lysine 45 and 69–73 (NAVGL). Positions 99 and 127 each coordinate FMN. Asparagine 127 serves as a coordination point for substrate. The active-site Nucleophile is cysteine 130. 2 residues coordinate FMN: lysine 165 and isoleucine 191. 192–193 (NT) is a binding site for substrate. FMN-binding positions include glycine 217, 243 to 244 (GG), and 265 to 266 (GT).

The protein belongs to the dihydroorotate dehydrogenase family. Type 1 subfamily. In terms of assembly, heterotetramer of 2 PyrK and 2 PyrD type B subunits. FMN serves as cofactor.

Its subcellular location is the cytoplasm. It catalyses the reaction (S)-dihydroorotate + NAD(+) = orotate + NADH + H(+). It functions in the pathway pyrimidine metabolism; UMP biosynthesis via de novo pathway; orotate from (S)-dihydroorotate (NAD(+) route): step 1/1. In terms of biological role, catalyzes the conversion of dihydroorotate to orotate with NAD(+) as electron acceptor. This chain is Dihydroorotate dehydrogenase B (NAD(+)), catalytic subunit (pyrD), found in Parabacteroides distasonis (strain ATCC 8503 / DSM 20701 / CIP 104284 / JCM 5825 / NCTC 11152).